We begin with the raw amino-acid sequence, 463 residues long: Argininosuccinate lyase (463 aa).

The protein belongs to the lyase 1 family. Argininosuccinate lyase subfamily.

It is found in the cytoplasm. It carries out the reaction 2-(N(omega)-L-arginino)succinate = fumarate + L-arginine. Its pathway is amino-acid biosynthesis; L-arginine biosynthesis; L-arginine from L-ornithine and carbamoyl phosphate: step 3/3. This is Argininosuccinate lyase from Chlorobaculum tepidum (strain ATCC 49652 / DSM 12025 / NBRC 103806 / TLS) (Chlorobium tepidum).